The primary structure comprises 371 residues: Alanine racemase (371 aa).

Lys39 (proton acceptor; specific for D-alanine) is an active-site residue. The residue at position 39 (Lys39) is an N6-(pyridoxal phosphate)lysine. Substrate is bound at residue Arg137. The active-site Proton acceptor; specific for L-alanine is Tyr266. Residue Met314 coordinates substrate.

This sequence belongs to the alanine racemase family. It depends on pyridoxal 5'-phosphate as a cofactor.

The catalysed reaction is L-alanine = D-alanine. It participates in amino-acid biosynthesis; D-alanine biosynthesis; D-alanine from L-alanine: step 1/1. Its function is as follows. Catalyzes the interconversion of L-alanine and D-alanine. May also act on other amino acids. In Desulfovibrio desulfuricans (strain ATCC 27774 / DSM 6949 / MB), this protein is Alanine racemase (alr).